The sequence spans 149 residues: Large ribosomal subunit protein uL30 (149 aa).

It belongs to the universal ribosomal protein uL30 family. Part of the 50S ribosomal subunit.

The protein is Large ribosomal subunit protein uL30 of Methanopyrus kandleri (strain AV19 / DSM 6324 / JCM 9639 / NBRC 100938).